Reading from the N-terminus, the 138-residue chain is Large ribosomal subunit protein bL19 (138 aa).

The protein belongs to the bacterial ribosomal protein bL19 family.

Its function is as follows. This protein is located at the 30S-50S ribosomal subunit interface and may play a role in the structure and function of the aminoacyl-tRNA binding site. The chain is Large ribosomal subunit protein bL19 from Rickettsia canadensis (strain McKiel).